The chain runs to 215 residues: MIPATPFLQATALACERDGRMLFENLDLHLHTGDMLQISGPNGCGKTSLLRLLCGLMQPTAGQILLDAQPLGRQPAAPGRKPLWIGHAPAIKDVLTPLENLSWLSALHQPDGADADTIATALDAVGLAGFEDVPCHTLSAGQQRRVALARLYLPGPPLWLLDEPFTALDRQGIEQLEKHLAEHCEHGGMIVMTTHHSLNRLPAGYRDLDLGQWSA.

The 208-residue stretch at 8-215 folds into the ABC transporter domain; sequence LQATALACER…RDLDLGQWSA (208 aa). 40 to 47 contacts ATP; sequence GPNGCGKT.

The protein belongs to the ABC transporter superfamily. CcmA exporter (TC 3.A.1.107) family. The complex is composed of two ATP-binding proteins (CcmA) and two transmembrane proteins (CcmB).

The protein resides in the cell inner membrane. It catalyses the reaction heme b(in) + ATP + H2O = heme b(out) + ADP + phosphate + H(+). In terms of biological role, part of the ABC transporter complex CcmAB involved in the biogenesis of c-type cytochromes; once thought to export heme, this seems not to be the case, but its exact role is uncertain. Responsible for energy coupling to the transport system. In Pseudomonas syringae pv. syringae (strain B728a), this protein is Cytochrome c biogenesis ATP-binding export protein CcmA.